Here is a 177-residue protein sequence, read N- to C-terminus: Protein Flattop (177 aa).

Residues 113 to 177 (ILGKPHDPDS…TPGPQRPAKS (65 aa)) form a disordered region. Positions 115 to 124 (GKPHDPDSQK) are enriched in basic and acidic residues. Polar residues predominate over residues 132 to 163 (TKTVQQARSPTIIPSSPAANLNSPDELQSSHP).

This sequence belongs to the Flattop family. In terms of assembly, microtubule inner protein component of sperm flagellar doublet microtubules. Interacts with DLG3. Expressed in airway epithelial cells.

Its subcellular location is the cytoplasm. It is found in the cytoskeleton. The protein resides in the cilium basal body. The protein localises to the cell projection. It localises to the cilium. Its subcellular location is the apical cell membrane. It is found in the cilium axoneme. The protein resides in the flagellum axoneme. In terms of biological role, microtubule inner protein (MIP) part of the dynein-decorated doublet microtubules (DMTs) in cilia axoneme. Acts as a regulator of cilium basal body docking and positioning in mono- and multiciliated cells. Regulates basal body docking and cilia formation in multiciliated lung cells. Regulates kinocilium positioning and stereocilia bundle morphogenesis in the inner ear. The protein is Protein Flattop of Homo sapiens (Human).